A 158-amino-acid polypeptide reads, in one-letter code: GTP-dependent dephospho-CoA kinase (158 aa).

GTP is bound by residues Asp35, Ile36, Val37, Asp54, Lys56, Glu109, and Asp132.

Belongs to the GTP-dependent DPCK family.

It carries out the reaction 3'-dephospho-CoA + GTP = GDP + CoA + H(+). It functions in the pathway cofactor biosynthesis; coenzyme A biosynthesis. In terms of biological role, catalyzes the GTP-dependent phosphorylation of the 3'-hydroxyl group of dephosphocoenzyme A to form coenzyme A (CoA). In Methanocaldococcus jannaschii (strain ATCC 43067 / DSM 2661 / JAL-1 / JCM 10045 / NBRC 100440) (Methanococcus jannaschii), this protein is GTP-dependent dephospho-CoA kinase.